The chain runs to 96 residues: Co-chaperonin GroES (96 aa).

Belongs to the GroES chaperonin family. In terms of assembly, heptamer of 7 subunits arranged in a ring. Interacts with the chaperonin GroEL.

The protein localises to the cytoplasm. Functionally, together with the chaperonin GroEL, plays an essential role in assisting protein folding. The GroEL-GroES system forms a nano-cage that allows encapsulation of the non-native substrate proteins and provides a physical environment optimized to promote and accelerate protein folding. GroES binds to the apical surface of the GroEL ring, thereby capping the opening of the GroEL channel. The polypeptide is Co-chaperonin GroES (Methylobacillus flagellatus (strain ATCC 51484 / DSM 6875 / VKM B-1610 / KT)).